A 316-amino-acid polypeptide reads, in one-letter code: Methionyl-tRNA formyltransferase (316 aa).

Residue 112–115 (SLLP) coordinates (6S)-5,6,7,8-tetrahydrofolate.

The protein belongs to the Fmt family.

The enzyme catalyses L-methionyl-tRNA(fMet) + (6R)-10-formyltetrahydrofolate = N-formyl-L-methionyl-tRNA(fMet) + (6S)-5,6,7,8-tetrahydrofolate + H(+). Functionally, attaches a formyl group to the free amino group of methionyl-tRNA(fMet). The formyl group appears to play a dual role in the initiator identity of N-formylmethionyl-tRNA by promoting its recognition by IF2 and preventing the misappropriation of this tRNA by the elongation apparatus. The chain is Methionyl-tRNA formyltransferase from Flavobacterium psychrophilum (strain ATCC 49511 / DSM 21280 / CIP 103535 / JIP02/86).